Here is a 365-residue protein sequence, read N- to C-terminus: Aminomethyltransferase (365 aa).

The protein belongs to the GcvT family. In terms of assembly, the glycine cleavage system is composed of four proteins: P, T, L and H.

It carries out the reaction N(6)-[(R)-S(8)-aminomethyldihydrolipoyl]-L-lysyl-[protein] + (6S)-5,6,7,8-tetrahydrofolate = N(6)-[(R)-dihydrolipoyl]-L-lysyl-[protein] + (6R)-5,10-methylene-5,6,7,8-tetrahydrofolate + NH4(+). Its function is as follows. The glycine cleavage system catalyzes the degradation of glycine. In Desulfitobacterium hafniense (strain DSM 10664 / DCB-2), this protein is Aminomethyltransferase.